Reading from the N-terminus, the 69-residue chain is Mitotic-spindle organizing protein 1 (69 aa).

The protein belongs to the MOZART1 family. Part of the gamma-tubulin complex.

The protein localises to the cytoplasm. Its subcellular location is the cytoskeleton. It is found in the microtubule organizing center. It localises to the spindle. Functionally, required for gamma-tubulin complex recruitment to the microtubule organizing centers (MTOCs). The polypeptide is Mitotic-spindle organizing protein 1 (Picea sitchensis (Sitka spruce)).